We begin with the raw amino-acid sequence, 418 residues long: Thyroxine-binding globulin (418 aa).

The first 20 residues, 1 to 20 (MSVFFYLFVLVFGLQATIHC), serve as a signal peptide directing secretion. Asn-24, Asn-39, Asn-102, Asn-168, Asn-227, and Asn-256 each carry an N-linked (GlcNAc...) asparagine glycan. Asn-296 and Lys-401 together coordinate thyroxine.

Belongs to the serpin family.

Its subcellular location is the secreted. Major thyroid hormone transport protein in serum. This chain is Thyroxine-binding globulin (Serpina7), found in Mus musculus (Mouse).